The following is a 279-amino-acid chain: Pantothenate synthetase (279 aa).

An ATP-binding site is contributed by 26 to 33 (MGNLHEGH). The active-site Proton donor is histidine 33. Glutamine 57 contributes to the (R)-pantoate binding site. Glutamine 57 is a beta-alanine binding site. 144–147 (GKKD) lines the ATP pocket. Glutamine 150 contributes to the (R)-pantoate binding site. ATP is bound by residues valine 173 and 181–184 (LSSR).

This sequence belongs to the pantothenate synthetase family. In terms of assembly, homodimer.

The protein localises to the cytoplasm. It catalyses the reaction (R)-pantoate + beta-alanine + ATP = (R)-pantothenate + AMP + diphosphate + H(+). It participates in cofactor biosynthesis; (R)-pantothenate biosynthesis; (R)-pantothenate from (R)-pantoate and beta-alanine: step 1/1. Its function is as follows. Catalyzes the condensation of pantoate with beta-alanine in an ATP-dependent reaction via a pantoyl-adenylate intermediate. This is Pantothenate synthetase from Burkholderia thailandensis (strain ATCC 700388 / DSM 13276 / CCUG 48851 / CIP 106301 / E264).